The chain runs to 648 residues: Protein associated with UVRAG as autophagy enhancer (648 aa).

2 stretches are compositionally biased toward polar residues: residues 131–146 and 157–173; these read QESL…TSPS and PHLT…SSSR. The segment at 131 to 173 is disordered; the sequence is QESLLKNPKTVATSPSPKEGSARSESPHLTASTDDGDARSSSR. A Phosphoserine modification is found at serine 144. The interval 183–222 is interaction with UVRAG; sequence ETFMLPADVEKENLHFYAADIIISVIENMKCNLPNQQQPE. An N6-acetyllysine mark is found at lysine 469, lysine 509, lysine 519, lysine 559, and lysine 619.

Interacts with UVRAG; the interaction is direct and promotes association with the PI3K/PI3KC3 and HOPS complexes. Interacts with STX17. In terms of processing, phosphorylated by MTOR at Ser-144 under nutrient-rich conditions. Phosphorylation prevents acetylation by KAT5/TIP60 and impairs RUBCNL/PACER function and autophagosome maturation. Under autophagy induction, Phosphorylation by MTOR is repressed, enabling acetylation by KAT5/TIP60. Acetylated by KAT5/TIP60 under autophagy induction, promoting autophagosome maturation and lipid metabolism. Acetylation is prevented by phosphorylation by MTOR. Lys-469 and Lys-559 constitute the key sites for tuning function in autophagy.

The protein localises to the cytoplasmic vesicle. Its subcellular location is the autophagosome membrane. Functionally, regulator of autophagy that promotes autophagosome maturation by facilitating the biogenesis of phosphatidylinositol 3-phosphate (PtdIns(3)P) in late steps of autophagy. Acts by antagonizing RUBCN, thereby stimulating phosphatidylinositol 3-kinase activity of the PI3K/PI3KC3 complex. Following anchorage to the autophagosomal SNARE STX17, promotes the recruitment of PI3K/PI3KC3 and HOPS complexes to the autophagosome to regulate the fusion specificity of autophagosomes with late endosomes/lysosomes. Binds phosphoinositides phosphatidylinositol 3-phosphate (PtdIns(3)P), 4-phosphate (PtdIns(4)P) and 5-phosphate (PtdIns(5)P). In addition to its role in autophagy, acts as a regulator of lipid and glycogen homeostasis. May act as a tumor suppressor. The protein is Protein associated with UVRAG as autophagy enhancer of Mus musculus (Mouse).